Here is a 58-residue protein sequence, read N- to C-terminus: Basic phospholipase A2 homolog PocTX (58 aa).

Cys-29 and Cys-45 form a disulfide bridge.

As to expression, expressed by the venom gland.

It localises to the secreted. Its function is as follows. Wasp venom phospholipase A2 homolog that lacks enzymatic activity. The sequence is that of Basic phospholipase A2 homolog PocTX from Polybia occidentalis (Paper wasp).